Here is a 355-residue protein sequence, read N- to C-terminus: Sorbitol dehydrogenase (355 aa).

N-acetylalanine is present on Ala-2. Cys-43 is a Zn(2+) binding site. Substrate is bound at residue Tyr-49. Zn(2+) is bound by residues His-68 and Glu-69. Glu-154 lines the substrate pocket. NAD(+) contacts are provided by residues Ile-182, Asp-202, Arg-207, 271-273 (VGL), and 295-297 (IFR). Substrate contacts are provided by Arg-297 and Tyr-298.

Belongs to the zinc-containing alcohol dehydrogenase family. Homotetramer. The cofactor is Zn(2+). Expressed in liver.

The protein localises to the mitochondrion membrane. It localises to the cell projection. It is found in the cilium. The protein resides in the flagellum. The catalysed reaction is keto-D-fructose + NADH + H(+) = D-sorbitol + NAD(+). Its function is as follows. Polyol dehydrogenase that catalyzes the reversible NAD(+)-dependent oxidation of various sugar alcohols. Is active with D-sorbitol (D-glucitol) as substrate, leading to the C2-oxidized product D-fructose. Is a key enzyme in the polyol pathway that interconverts glucose and fructose via sorbitol, which constitutes an important alternate route for glucose metabolism. This Gallus gallus (Chicken) protein is Sorbitol dehydrogenase (SORD).